The primary structure comprises 998 residues: Beta-galactosidase (998 aa).

Residue glutamate 431 is the Proton donor of the active site. Residue glutamate 508 is the Nucleophile of the active site.

The protein belongs to the glycosyl hydrolase 2 family.

The enzyme catalyses Hydrolysis of terminal non-reducing beta-D-galactose residues in beta-D-galactosides.. The polypeptide is Beta-galactosidase (lacZ) (Lactococcus lactis subsp. lactis (strain IL1403) (Streptococcus lactis)).